Consider the following 101-residue polypeptide: MAKQALLQRELKREKLAAKFAKKYAELKATSNDAKRSDEERALARLELQKLPRNANPTRQRNRCAITGRPRGTFRQFGLARAKIRELAFAGDIPGITKASW.

It belongs to the universal ribosomal protein uS14 family. As to quaternary structure, part of the 30S ribosomal subunit. Contacts proteins S3 and S10.

Functionally, binds 16S rRNA, required for the assembly of 30S particles and may also be responsible for determining the conformation of the 16S rRNA at the A site. The chain is Small ribosomal subunit protein uS14 from Polaromonas sp. (strain JS666 / ATCC BAA-500).